A 227-amino-acid chain; its full sequence is MAYPHQLGFQDATSPIMEELLSFHDHTLMIVFLISSLVLYLISLMLTTKLTHTSTMDAQEVETVWTILPAIILIMIALPSLRILYMMDEINNPLLTVKTMGHQWYWTYEYTDYEELNFDSYMVPTTDLNPGELRLLEVDNRVVLPMETPIRMLISSEDVLHSWTVPSMGLKTDAIPGRLNQATLTSSRPGLFYGQCSEICGSNHSFMPIVIEMVPLKSFENWTTSMT.

Over 1–14 (MAYPHQLGFQDATS) the chain is Mitochondrial intermembrane. The chain crosses the membrane as a helical span at residues 15-45 (PIMEELLSFHDHTLMIVFLISSLVLYLISLM). The Mitochondrial matrix segment spans residues 46–59 (LTTKLTHTSTMDAQ). A helical membrane pass occupies residues 60–87 (EVETVWTILPAIILIMIALPSLRILYMM). The Mitochondrial intermembrane portion of the chain corresponds to 88 to 227 (DEINNPLLTV…SFENWTTSMT (140 aa)). Cu cation is bound by residues H161, C196, E198, C200, H204, and M207. E198 is a Mg(2+) binding site.

Belongs to the cytochrome c oxidase subunit 2 family. In terms of assembly, component of the cytochrome c oxidase (complex IV, CIV), a multisubunit enzyme composed of 14 subunits. The complex is composed of a catalytic core of 3 subunits MT-CO1, MT-CO2 and MT-CO3, encoded in the mitochondrial DNA, and 11 supernumerary subunits COX4I, COX5A, COX5B, COX6A, COX6B, COX6C, COX7A, COX7B, COX7C, COX8 and NDUFA4, which are encoded in the nuclear genome. The complex exists as a monomer or a dimer and forms supercomplexes (SCs) in the inner mitochondrial membrane with NADH-ubiquinone oxidoreductase (complex I, CI) and ubiquinol-cytochrome c oxidoreductase (cytochrome b-c1 complex, complex III, CIII), resulting in different assemblies (supercomplex SCI(1)III(2)IV(1) and megacomplex MCI(2)III(2)IV(2)). Found in a complex with TMEM177, COA6, COX18, COX20, SCO1 and SCO2. Interacts with TMEM177 in a COX20-dependent manner. Interacts with COX20. Interacts with COX16. Cu cation serves as cofactor.

It is found in the mitochondrion inner membrane. The catalysed reaction is 4 Fe(II)-[cytochrome c] + O2 + 8 H(+)(in) = 4 Fe(III)-[cytochrome c] + 2 H2O + 4 H(+)(out). In terms of biological role, component of the cytochrome c oxidase, the last enzyme in the mitochondrial electron transport chain which drives oxidative phosphorylation. The respiratory chain contains 3 multisubunit complexes succinate dehydrogenase (complex II, CII), ubiquinol-cytochrome c oxidoreductase (cytochrome b-c1 complex, complex III, CIII) and cytochrome c oxidase (complex IV, CIV), that cooperate to transfer electrons derived from NADH and succinate to molecular oxygen, creating an electrochemical gradient over the inner membrane that drives transmembrane transport and the ATP synthase. Cytochrome c oxidase is the component of the respiratory chain that catalyzes the reduction of oxygen to water. Electrons originating from reduced cytochrome c in the intermembrane space (IMS) are transferred via the dinuclear copper A center (CU(A)) of subunit 2 and heme A of subunit 1 to the active site in subunit 1, a binuclear center (BNC) formed by heme A3 and copper B (CU(B)). The BNC reduces molecular oxygen to 2 water molecules using 4 electrons from cytochrome c in the IMS and 4 protons from the mitochondrial matrix. This Georychus capensis (Cape mole rat) protein is Cytochrome c oxidase subunit 2 (MT-CO2).